The sequence spans 469 residues: UDP-N-acetylmuramoylalanine--D-glutamate ligase (469 aa).

121-127 (GTNGKST) contacts ATP.

Belongs to the MurCDEF family.

The protein resides in the cytoplasm. The enzyme catalyses UDP-N-acetyl-alpha-D-muramoyl-L-alanine + D-glutamate + ATP = UDP-N-acetyl-alpha-D-muramoyl-L-alanyl-D-glutamate + ADP + phosphate + H(+). It functions in the pathway cell wall biogenesis; peptidoglycan biosynthesis. Cell wall formation. Catalyzes the addition of glutamate to the nucleotide precursor UDP-N-acetylmuramoyl-L-alanine (UMA). The polypeptide is UDP-N-acetylmuramoylalanine--D-glutamate ligase (Agrobacterium fabrum (strain C58 / ATCC 33970) (Agrobacterium tumefaciens (strain C58))).